Consider the following 55-residue polypeptide: Ribosome biogenesis protein Nop10 (55 aa).

It belongs to the NOP10 family.

Involved in ribosome biogenesis; more specifically in 18S rRNA pseudouridylation and in cleavage of pre-rRNA. The sequence is that of Ribosome biogenesis protein Nop10 from Methanosphaera stadtmanae (strain ATCC 43021 / DSM 3091 / JCM 11832 / MCB-3).